We begin with the raw amino-acid sequence, 123 residues long: Fluoride-specific ion channel FluC (123 aa).

Helical transmembrane passes span 5–25 (LIIG…SGII), 29–49 (FGIP…VGFV), 65–85 (LIIT…YETF), and 94–114 (IKFL…IYVG). Residues glycine 72 and threonine 75 each contribute to the Na(+) site.

It belongs to the fluoride channel Fluc/FEX (TC 1.A.43) family.

It is found in the cell membrane. The enzyme catalyses fluoride(in) = fluoride(out). Na(+) is not transported, but it plays an essential structural role and its presence is essential for fluoride channel function. Its function is as follows. Fluoride-specific ion channel. Important for reducing fluoride concentration in the cell, thus reducing its toxicity. This is Fluoride-specific ion channel FluC from Methanococcus aeolicus (strain ATCC BAA-1280 / DSM 17508 / OCM 812 / Nankai-3).